We begin with the raw amino-acid sequence, 199 residues long: Recombination protein RecR (199 aa).

The segment at 56–71 (CSICFNWSAEDPCEIC) adopts a C4-type zinc-finger fold. The Toprim domain maps to 79 to 174 (SLWCVVADVK…TLRMTRLAFG (96 aa)).

The protein belongs to the RecR family.

In terms of biological role, may play a role in DNA repair. It seems to be involved in an RecBC-independent recombinational process of DNA repair. It may act with RecF and RecO. This is Recombination protein RecR from Synechococcus sp. (strain JA-2-3B'a(2-13)) (Cyanobacteria bacterium Yellowstone B-Prime).